The following is a 196-amino-acid chain: DnaA initiator-associating protein DiaA (196 aa).

In terms of domain architecture, SIS spans 34–196 (LVQSLLNGNK…DNTLFPHQND (163 aa)).

It belongs to the SIS family. DiaA subfamily. In terms of assembly, homotetramer; dimer of dimers.

In terms of biological role, required for the timely initiation of chromosomal replication via direct interactions with the DnaA initiator protein. This Yersinia pestis bv. Antiqua (strain Antiqua) protein is DnaA initiator-associating protein DiaA.